We begin with the raw amino-acid sequence, 351 residues long: Divinyl chlorophyll a/b light-harvesting protein PcbA (351 aa).

Helical transmembrane passes span 27-47 (FIAA…AFTL), 64-84 (LIAL…GTFV), 89-109 (VTAI…GGLL), 202-222 (VMGG…FHIA), 242-262 (AILS…AFWC), and 305-325 (LTNV…WHAL).

The protein belongs to the PsbB/PsbC family. IsiA/Pcb subfamily. In terms of assembly, the antenna complex consists of divinyl chlorophylls (a and b) and divinyl chlorophyll a/b binding proteins and binds more divinyl chlorophyll b than does the antenna complex from high-light-adapted Prochlorococcus. Requires divinyl chlorophyll a as cofactor. It depends on divinyl chlorophyll b as a cofactor.

The protein localises to the cellular thylakoid membrane. Its function is as follows. The antenna complex functions as a light receptor, it captures and delivers excitation energy to photosystems II and I. The Prochlorales pcb genes are not related to higher plant LHCs. This chain is Divinyl chlorophyll a/b light-harvesting protein PcbA (pcbA), found in Prochlorococcus marinus (strain SARG / CCMP1375 / SS120).